The primary structure comprises 305 residues: Acyl transferase (305 aa).

Active-site charge relay system residues include serine 114, aspartate 211, and histidine 241.

It belongs to the LuxD family.

Its pathway is lipid metabolism; fatty acid reduction for biolumincescence. Its function is as follows. Acyl transferase is part of the fatty acid reductase system required for aldehyde biosynthesis; it produces fatty acids for the luminescent reaction. This chain is Acyl transferase, found in Vibrio campbellii (strain ATCC BAA-1116).